A 182-amino-acid polypeptide reads, in one-letter code: Putative manganese efflux pump MntP 1 (182 aa).

6 consecutive transmembrane segments (helical) span residues 4–24 (LLLLSLALSMDAFAVSLGLGA), 42–62 (IFQGIMPLLGFFVGVTFIAFI), 63–83 (SAFDHYLAFGILALIGAKMIY), 103–123 (LILSIATSIDALAAGVSLHLI), 127–147 (VFLSCTIIAFTTFLLSYLGVL), and 162–182 (ILGGVILIGIGSKILLEHLFF).

Belongs to the MntP (TC 9.B.29) family.

It localises to the cell inner membrane. Probably functions as a manganese efflux pump. This chain is Putative manganese efflux pump MntP 1, found in Wolinella succinogenes (strain ATCC 29543 / DSM 1740 / CCUG 13145 / JCM 31913 / LMG 7466 / NCTC 11488 / FDC 602W) (Vibrio succinogenes).